The chain runs to 153 residues: General odorant-binding protein lush (153 aa).

The first 29 residues, 1 to 29, serve as a signal peptide directing secretion; it reads MKHWKRRSSAVFAIVLQVLVLLLPDPAVA. 3 disulfides stabilise this stretch: cysteine 46/cysteine 79, cysteine 75/cysteine 132, and cysteine 121/cysteine 141. Serine 81 and threonine 86 together coordinate 1-propanol. Residues serine 81 and threonine 86 each coordinate butan-1-ol. Ethanol is bound by residues serine 81 and threonine 86.

It belongs to the PBP/GOBP family. As to expression, specifically expressed in chemosensory system in both males and females. Expressed in a subset of trichoid chemosensory sensilla located on the ventral-lateral surface of the third antennal segment. Secreted from non-neuronal support cells into the sensillum lymph that bathes the olfactory neurons within these sensilla.

It localises to the secreted. Odorant-binding protein required for olfactory behavior and for activity of pheromone-sensitive neurons. Binds to alcohols and mediates avoidance behavior to high concentrations of alcohols, the alcohol-binding possibly resulting in activation of receptors on T2B neurons, the activation of these receptors inhibiting these neurons. Acts in concert with Snmp and lush to capture cVA molecules on the surface of Or67d expressing olfactory dendrites and facilitate their transfer to the odorant-receptor Orco complex. Required for cVA response, probably by binding to VA. May act by serving as an adapter that bridges the presence of gaseous pheromone molecules, cVA, to activation of specific neuronal receptors expressed on T1 olfactory neurons, possibly via a specific conformational change induced by cVA that in turn activates T1 receptors. T1 neurons are excited by the pheromone VA, while T2 neurons are inhibited by alcohols. Also binds to phthalates. This chain is General odorant-binding protein lush (lush), found in Drosophila melanogaster (Fruit fly).